Here is a 254-residue protein sequence, read N- to C-terminus: Sensory transduction protein LytR (254 aa).

The Response regulatory domain maps to 2-116; that stretch reads RAIIVDDEPL…RIAQAVHKVE (115 aa). Asp-53 carries the 4-aspartylphosphate modification. The tract at residues 120–143 is disordered; that stretch reads GQTTEHHSDSYTTASMDTQNNEKT. A compositionally biased stretch (polar residues) spans 129 to 138; the sequence is SYTTASMDTQ. The HTH LytTR-type domain occupies 149-253; the sequence is LPIEVNERIH…MKTFKQMMGL (105 aa).

Phosphorylated by LytS.

The protein resides in the cytoplasm. Functionally, member of the two-component regulatory system LytR/LytS that probably regulates genes involved in cell wall metabolism. This Staphylococcus saprophyticus subsp. saprophyticus (strain ATCC 15305 / DSM 20229 / NCIMB 8711 / NCTC 7292 / S-41) protein is Sensory transduction protein LytR (lytR).